The sequence spans 252 residues: Trans-aconitate 2-methyltransferase (252 aa).

Belongs to the methyltransferase superfamily. Tam family.

It localises to the cytoplasm. It catalyses the reaction trans-aconitate + S-adenosyl-L-methionine = (E)-3-(methoxycarbonyl)pent-2-enedioate + S-adenosyl-L-homocysteine. Catalyzes the S-adenosylmethionine monomethyl esterification of trans-aconitate. This chain is Trans-aconitate 2-methyltransferase, found in Escherichia coli (strain UTI89 / UPEC).